A 509-amino-acid chain; its full sequence is Histidine--tRNA ligase (509 aa).

It belongs to the class-II aminoacyl-tRNA synthetase family. As to quaternary structure, homodimer.

The protein resides in the cytoplasm. It catalyses the reaction tRNA(His) + L-histidine + ATP = L-histidyl-tRNA(His) + AMP + diphosphate + H(+). The protein is Histidine--tRNA ligase of Rhodopseudomonas palustris (strain TIE-1).